The following is a 762-amino-acid chain: ATP-dependent RNA helicase SUV3 homolog, mitochondrial (762 aa).

Residues 1 to 36 (MQNTRRCISLICVTRQPPSLRATYGAVAAARCLHRA) constitute a mitochondrion transit peptide. One can recognise a Helicase ATP-binding domain in the interval 181 to 321 (NARALTRKIV…ALELLQKICE (141 aa)). An ATP-binding site is contributed by 194–201 (GPTNSGKT). The Helicase C-terminal domain maps to 331-508 (RYDRLTELTV…PTADQIELYA (178 aa)). A disordered region spans residues 716–762 (EWDAQQVGQAAAASTSSKESQESPPDDSDDEDSYPGSYKKTRRKRRK). Residues 721–730 (QVGQAAAAST) show a composition bias toward polar residues. Positions 739–748 (PPDDSDDEDS) are enriched in acidic residues.

The protein belongs to the helicase family. Mg(2+) is required as a cofactor. Requires Mn(2+) as cofactor.

Its subcellular location is the mitochondrion. The enzyme catalyses ATP + H2O = ADP + phosphate + H(+). Functionally, major helicase player in mitochondrial RNA metabolism and maintenance. Likely component of the mitochondrial degradosome (mtEXO) complex, that degrades 3' overhang double-stranded RNA with a 3'-to-5' directionality in an ATP-dependent manner. ATPase and ATP-dependent multisubstrate helicase, able to unwind double-stranded (ds) DNA and RNA, and RNA/DNA heteroduplexes in the 5'-to-3' direction. Regulates mRNA stability and is required for the correct processing and maturation of mitochondrial transcripts. The chain is ATP-dependent RNA helicase SUV3 homolog, mitochondrial from Drosophila pseudoobscura pseudoobscura (Fruit fly).